The primary structure comprises 351 residues: Rhodopsin (351 aa).

Topologically, residues 1-36 (MNGTEGQDFYVPMSNKTGVVRSPFEYPQYYLAEPWK) are extracellular. 2 N-linked (GlcNAc...) asparagine glycosylation sites follow: Asn-2 and Asn-15. A helical membrane pass occupies residues 37-61 (FSALAAYMFMLILLGFPVNFLTLYV). Residues 62–73 (TIQHKKLRTPLN) lie on the Cytoplasmic side of the membrane. A helical membrane pass occupies residues 74–96 (YILLNLVVADLFMVFGGFTTTMY). The Extracellular portion of the chain corresponds to 97-110 (TSMNGYFVFGVTGC). Cys-110 and Cys-187 are joined by a disulfide. A helical membrane pass occupies residues 111–133 (YIEGFFATLGGEIALWSLVVLAV). The 'Ionic lock' involved in activated form stabilization signature appears at 134–136 (ERY). Topologically, residues 134-152 (ERYVVVCKPMSNFRFGENH) are cytoplasmic. The chain crosses the membrane as a helical span at residues 153 to 173 (AIMGVAFSWIMAMACAAPPLF). The Extracellular portion of the chain corresponds to 174 to 202 (GWSRYIPEGMQCSCGIDYYTLKPEINNES). A helical transmembrane segment spans residues 203–224 (FVIYMFVVHFMIPLAVIFFCYG). The Cytoplasmic segment spans residues 225–252 (NLVCTVKEAAAQQQESATTQKAEKEVTR). The chain crosses the membrane as a helical span at residues 253–274 (MVIIMVIAFLICWVPYASVAFY). Residues 275–286 (IFTNQGSDFGPI) lie on the Extracellular side of the membrane. Residues 287-308 (FMTIPAFFAKSSAIYNPVIYIV) traverse the membrane as a helical segment. An N6-(retinylidene)lysine modification is found at Lys-296. The Cytoplasmic portion of the chain corresponds to 309–351 (MNKQFRNCMITTLCCGKNPLGDEDTSAGKTETSSVSTSQVSPA). Residues Cys-322 and Cys-323 are each lipidated (S-palmitoyl cysteine). Positions 331–351 (EDTSAGKTETSSVSTSQVSPA) are disordered. Positions 340-351 (TSSVSTSQVSPA) are enriched in low complexity. A Phosphoserine; by RK and GRK7 modification is found at Ser-341.

It belongs to the G-protein coupled receptor 1 family. Opsin subfamily. In terms of processing, contains one covalently linked retinal chromophore. Upon light absorption, the covalently bound 11-cis-retinal is converted to all-trans-retinal. After hydrolysis of the Schiff base and release of the covalently bound all-trans-retinal, active rhodopsin is regenerated by binding of a fresh molecule of 11-cis-retinal.

The protein localises to the membrane. It is found in the cell projection. The protein resides in the cilium. Its subcellular location is the photoreceptor outer segment. In terms of biological role, photoreceptor required for image-forming vision at low light intensity. Required for photoreceptor cell viability after birth. Light-induced isomerization of 11-cis to all-trans retinal triggers a conformational change that activates signaling via G-proteins. Subsequent receptor phosphorylation mediates displacement of the bound G-protein alpha subunit by arrestin and terminates signaling. The polypeptide is Rhodopsin (RHO) (Gallus gallus (Chicken)).